We begin with the raw amino-acid sequence, 457 residues long: Siroheme synthase (457 aa).

The segment at 1-204 (MDHLPIFCQL…NDQKAITETT (204 aa)) is precorrin-2 dehydrogenase /sirohydrochlorin ferrochelatase. Residues 22–23 (DV) and 43–44 (LA) each bind NAD(+). Ser-128 carries the phosphoserine modification. A uroporphyrinogen-III C-methyltransferase region spans residues 216–457 (GEVVLVGAGP…RDKLNWFSNH (242 aa)). Pro-225 provides a ligand contact to S-adenosyl-L-methionine. The Proton acceptor role is filled by Asp-248. The active-site Proton donor is the Lys-270. S-adenosyl-L-methionine contacts are provided by residues 301–303 (GGD), Ile-306, 331–332 (TA), Met-382, and Gly-411.

In the N-terminal section; belongs to the precorrin-2 dehydrogenase / sirohydrochlorin ferrochelatase family. It in the C-terminal section; belongs to the precorrin methyltransferase family.

The catalysed reaction is uroporphyrinogen III + 2 S-adenosyl-L-methionine = precorrin-2 + 2 S-adenosyl-L-homocysteine + H(+). The enzyme catalyses precorrin-2 + NAD(+) = sirohydrochlorin + NADH + 2 H(+). It catalyses the reaction siroheme + 2 H(+) = sirohydrochlorin + Fe(2+). Its pathway is cofactor biosynthesis; adenosylcobalamin biosynthesis; precorrin-2 from uroporphyrinogen III: step 1/1. The protein operates within cofactor biosynthesis; adenosylcobalamin biosynthesis; sirohydrochlorin from precorrin-2: step 1/1. It participates in porphyrin-containing compound metabolism; siroheme biosynthesis; precorrin-2 from uroporphyrinogen III: step 1/1. It functions in the pathway porphyrin-containing compound metabolism; siroheme biosynthesis; siroheme from sirohydrochlorin: step 1/1. Its pathway is porphyrin-containing compound metabolism; siroheme biosynthesis; sirohydrochlorin from precorrin-2: step 1/1. In terms of biological role, multifunctional enzyme that catalyzes the SAM-dependent methylations of uroporphyrinogen III at position C-2 and C-7 to form precorrin-2 via precorrin-1. Then it catalyzes the NAD-dependent ring dehydrogenation of precorrin-2 to yield sirohydrochlorin. Finally, it catalyzes the ferrochelation of sirohydrochlorin to yield siroheme. This Escherichia coli O6:H1 (strain CFT073 / ATCC 700928 / UPEC) protein is Siroheme synthase.